Consider the following 337-residue polypeptide: UDP-3-O-acylglucosamine N-acyltransferase (337 aa).

The Proton acceptor role is filled by His-238.

It belongs to the transferase hexapeptide repeat family. LpxD subfamily. In terms of assembly, homotrimer.

It catalyses the reaction a UDP-3-O-[(3R)-3-hydroxyacyl]-alpha-D-glucosamine + a (3R)-hydroxyacyl-[ACP] = a UDP-2-N,3-O-bis[(3R)-3-hydroxyacyl]-alpha-D-glucosamine + holo-[ACP] + H(+). It functions in the pathway bacterial outer membrane biogenesis; LPS lipid A biosynthesis. In terms of biological role, catalyzes the N-acylation of UDP-3-O-acylglucosamine using 3-hydroxyacyl-ACP as the acyl donor. Is involved in the biosynthesis of lipid A, a phosphorylated glycolipid that anchors the lipopolysaccharide to the outer membrane of the cell. In Xanthomonas campestris pv. campestris (strain 8004), this protein is UDP-3-O-acylglucosamine N-acyltransferase.